The following is a 462-amino-acid chain: L-seryl-tRNA(Sec) selenium transferase (462 aa).

K292 is modified (N6-(pyridoxal phosphate)lysine).

It belongs to the SelA family. Pyridoxal 5'-phosphate serves as cofactor.

The protein localises to the cytoplasm. The catalysed reaction is L-seryl-tRNA(Sec) + selenophosphate + H(+) = L-selenocysteinyl-tRNA(Sec) + phosphate. Its pathway is aminoacyl-tRNA biosynthesis; selenocysteinyl-tRNA(Sec) biosynthesis; selenocysteinyl-tRNA(Sec) from L-seryl-tRNA(Sec) (bacterial route): step 1/1. Converts seryl-tRNA(Sec) to selenocysteinyl-tRNA(Sec) required for selenoprotein biosynthesis. In Geobacter sulfurreducens (strain ATCC 51573 / DSM 12127 / PCA), this protein is L-seryl-tRNA(Sec) selenium transferase.